A 145-amino-acid polypeptide reads, in one-letter code: RNA polymerase I-specific transcription initiation factor RRN10 (145 aa).

As to quaternary structure, component of the UAF (upstream activation factor) complex which consists of UAF30, RRN5, RRN9, RRN10, and histones H3 and H4.

The protein resides in the nucleus. It localises to the nucleolus. Its function is as follows. Component of the UAF (upstream activation factor) complex which interacts with the upstream element of the RNA polymerase I promoter and forms a stable preinitiation complex. Together with SPT15/TBP UAF seems to stimulate basal transcription to a fully activated level. This chain is RNA polymerase I-specific transcription initiation factor RRN10 (RRN10), found in Saccharomyces cerevisiae (strain ATCC 204508 / S288c) (Baker's yeast).